Reading from the N-terminus, the 136-residue chain is uncharacterized protein (136 aa).

This is an uncharacterized protein from Leptolyngbya boryana (Plectonema boryanum).